The primary structure comprises 69 residues: Conotoxin Lt5.10 (69 aa).

The signal sequence occupies residues methionine 1–proline 19. Positions lysine 20–alanine 54 are excised as a propeptide.

This sequence belongs to the conotoxin T superfamily. Post-translationally, contains 2 disulfide bonds that can be either 'C1-C3, C2-C4' or 'C1-C4, C2-C3', since these disulfide connectivities have been observed for conotoxins with cysteine framework V (for examples, see AC P0DQQ7 and AC P81755). As to expression, expressed by the venom duct.

Its subcellular location is the secreted. The sequence is that of Conotoxin Lt5.10 from Conus litteratus (Lettered cone).